Consider the following 386-residue polypeptide: 23S rRNA (uracil(747)-C(5))-methyltransferase RlmC (386 aa).

Residues C7, C15, C18, and C94 each contribute to the [4Fe-4S] cluster site. S-adenosyl-L-methionine contacts are provided by Q219, F248, E269, and N316. The active-site Nucleophile is the C343.

It belongs to the class I-like SAM-binding methyltransferase superfamily. RNA M5U methyltransferase family. RlmC subfamily.

The catalysed reaction is uridine(747) in 23S rRNA + S-adenosyl-L-methionine = 5-methyluridine(747) in 23S rRNA + S-adenosyl-L-homocysteine + H(+). In terms of biological role, catalyzes the formation of 5-methyl-uridine at position 747 (m5U747) in 23S rRNA. The sequence is that of 23S rRNA (uracil(747)-C(5))-methyltransferase RlmC from Shewanella oneidensis (strain ATCC 700550 / JCM 31522 / CIP 106686 / LMG 19005 / NCIMB 14063 / MR-1).